A 463-amino-acid chain; its full sequence is Chaperone SurA (463 aa).

An N-terminal signal peptide occupies residues 1–25 (MTKPFSVVLASLLAITSTISPLASA). 2 PpiC domains span residues 174–276 (GSKY…KLME) and 289–388 (VTEY…QRVG). 2 disordered regions span residues 329 to 348 (ATAK…GDLG) and 434 to 463 (GDRA…KPTR). Positions 439 to 452 (NNATAAPAKSADPA) are enriched in low complexity. Over residues 453–463 (LPAPPPAKPTR) the composition is skewed to pro residues.

Its subcellular location is the periplasm. It catalyses the reaction [protein]-peptidylproline (omega=180) = [protein]-peptidylproline (omega=0). In terms of biological role, chaperone involved in the correct folding and assembly of outer membrane proteins. Recognizes specific patterns of aromatic residues and the orientation of their side chains, which are found more frequently in integral outer membrane proteins. May act in both early periplasmic and late outer membrane-associated steps of protein maturation. This chain is Chaperone SurA, found in Xanthomonas oryzae pv. oryzae (strain MAFF 311018).